Reading from the N-terminus, the 87-residue chain is UPF0386 protein RSKD131_0371 (87 aa).

This sequence belongs to the UPF0386 family.

This is UPF0386 protein RSKD131_0371 from Cereibacter sphaeroides (strain KD131 / KCTC 12085) (Rhodobacter sphaeroides).